We begin with the raw amino-acid sequence, 314 residues long: MTQPLRIVFAGTPEFAAQHLQALLDAGKSIVAVYTQPDRPAGRGQKLMPSPVKQLAVQHDIPVLQPQTLRDPAAQAELAALQADLMVVVAYGLILPQAVLDLPRLGCINSHASLLPRWRGAAPIQRAIEAGDSESGVTVMQMEAGLDTGPMLLKVNTPISDEDTGGSLHDRLALLGAHAVVKAVDALAAGTLTPEVQDDSLATYAHKLSKDEARVDWTRPAVELERLIRAFNPWPICHSTLNGETLKIHAAQLGEGRGVPGLILDASKAGLTVACGEGALSLTRLQLPGGKPLGFGDLYNSRREQFAPGLVLGQ.

Position 113–116 (113–116 (SLLP)) interacts with (6S)-5,6,7,8-tetrahydrofolate.

The protein belongs to the Fmt family.

It carries out the reaction L-methionyl-tRNA(fMet) + (6R)-10-formyltetrahydrofolate = N-formyl-L-methionyl-tRNA(fMet) + (6S)-5,6,7,8-tetrahydrofolate + H(+). In terms of biological role, attaches a formyl group to the free amino group of methionyl-tRNA(fMet). The formyl group appears to play a dual role in the initiator identity of N-formylmethionyl-tRNA by promoting its recognition by IF2 and preventing the misappropriation of this tRNA by the elongation apparatus. This is Methionyl-tRNA formyltransferase from Stutzerimonas stutzeri (strain A1501) (Pseudomonas stutzeri).